An 897-amino-acid polypeptide reads, in one-letter code: Serine/threonine-protein kinase ATG1 (897 aa).

The Protein kinase domain occupies 24–325 (YTAEKEIGKG…FEEFFANKVV (302 aa)). Residues 30-38 (IGKGSFATV) and lysine 54 contribute to the ATP site. Phosphoserine is present on serine 34. Threonine 129 is subject to Phosphothreonine. The active-site Proton acceptor is the aspartate 172. Threonine 226 bears the Phosphothreonine; by autocatalysis mark. Phosphoserine occurs at positions 304, 365, and 390. The short motif at 429–432 (YVVV) is the LIR element. The tract at residues 490 to 509 (LLRATSSSSGGSDGSRRPSL) is disordered. Phosphoserine; by PKA occurs at positions 508 and 515. A phosphoserine mark is found at serine 533, serine 551, and serine 552. Threonine 590 bears the Phosphothreonine mark. 9 positions are modified to phosphoserine: serine 621, serine 635, serine 638, serine 647, serine 677, serine 680, serine 683, serine 769, and serine 783. Residues 880–886 (DSIANRL) form a required for Cvt trafficking region.

The protein belongs to the protein kinase superfamily. Ser/Thr protein kinase family. APG1/unc-51/ULK1 subfamily. As to quaternary structure, homodimer. Dimerization requires the presence of ATG13. Forms a ternary complex with ATG13 and ATG17. Also interacts with ATG11. Post-translationally, autophosphorylated at Thr-226 and Ser-390. The phosphorylation state may play a role in the induction of protein degradation upon starvation. Phosphorylation at Thr-226 within the activation loop is required for protein kinase activity whereas phosphorylation at Ser-34 leads to inhibition of kinase activity. Phosphorylation of Ser-508 and Ser-515 by PKA is required to induce autophagy but not for kinase activity.

The protein resides in the cytoplasm. The protein localises to the preautophagosomal structure membrane. It catalyses the reaction L-seryl-[protein] + ATP = O-phospho-L-seryl-[protein] + ADP + H(+). It carries out the reaction L-threonyl-[protein] + ATP = O-phospho-L-threonyl-[protein] + ADP + H(+). Activated by hypophosphorylated form of ATG13 (present in nitrogen starvation conditions). Also activated by autophopsphorylation of Thr-226 and inhibited by phosphorylation of Ser-34. Its function is as follows. Serine/threonine protein kinase involved in the cytoplasm to vacuole transport (Cvt) and found to be essential in autophagy, where it is required for the formation of autophagosomes. Involved in the clearance of protein aggregates which cannot be efficiently cleared by the proteasome. Required for selective autophagic degradation of the nucleus (nucleophagy) as well as for mitophagy which contributes to regulate mitochondrial quantity and quality by eliminating the mitochondria to a basal level to fulfill cellular energy requirements and preventing excess ROS production. Also involved in endoplasmic reticulum-specific autophagic process, in selective removal of ER-associated degradation (ERAD) substrates. Plays a key role in ATG9 and ATG23 cycling through the pre-autophagosomal structure and is necessary to promote ATG18 binding to ATG9 through phosphorylation of ATG9. Catalyzes phosphorylation of ATG4, decreasing the interaction between ATG4 and ATG8 and impairing deconjugation of PE-conjugated forms of ATG8. Finally, ATG1 is also required for the maintenance of cell viability under starvation and for glycogen storage during stationary phase. Plays a role in genome stability through suppression of abnormal mitosis under starvation, and in regulation of filamentous growth. This is Serine/threonine-protein kinase ATG1 from Saccharomyces cerevisiae (strain YJM789) (Baker's yeast).